We begin with the raw amino-acid sequence, 505 residues long: L-carnitine/gamma-butyrobetaine antiporter (505 aa).

12 consecutive transmembrane segments (helical) span residues isoleucine 10–valine 30, tryptophan 51–phenylalanine 71, isoleucine 92–isoleucine 112, glycine 143–valine 163, phenylalanine 195–valine 215, leucine 231–leucine 251, serine 263–methionine 283, tryptophan 316–alanine 336, leucine 347–glycine 367, leucine 403–isoleucine 423, leucine 446–leucine 466, and alanine 475–isoleucine 495.

Belongs to the BCCT transporter (TC 2.A.15) family. CaiT subfamily. In terms of assembly, homotrimer.

It is found in the cell inner membrane. The enzyme catalyses 4-(trimethylamino)butanoate(in) + (R)-carnitine(out) = 4-(trimethylamino)butanoate(out) + (R)-carnitine(in). The protein operates within amine and polyamine metabolism; carnitine metabolism. Its function is as follows. Catalyzes the exchange of L-carnitine for gamma-butyrobetaine. This is L-carnitine/gamma-butyrobetaine antiporter from Salmonella choleraesuis (strain SC-B67).